The following is a 499-amino-acid chain: Ammonium transporter MEP2 (499 aa).

Over 1-31 (MSYNFTGTPTGEGTGGNSLTTDLNTQFDLAN) the chain is Extracellular. A glycan (N-linked (GlcNAc...) asparagine) is linked at asparagine 4. A helical membrane pass occupies residues 32–52 (MGWIGVASAGVWIMVPGIGLL). At 53–62 (YSGLSRKKHA) the chain is on the cytoplasmic side. Residues 63–83 (LSLLWASMMASAVCIFQWFFW) form a helical membrane-spanning segment. At 84-122 (GYSLAFSHNTRGNGFIGTLEFFGFRNVLGAPSSVSSLPD) the chain is on the extracellular side. The helical transmembrane segment at 123–143 (ILFAVYQGMFAAVTGALMLGG) threads the bilayer. The Cytoplasmic portion of the chain corresponds to 144 to 152 (ACERARLFP). The helical transmembrane segment at 153–173 (MMVFLFLWMTIVYCPIACWVW) threads the bilayer. Residues 174–187 (NAEGWLVKLGSLDY) are Extracellular-facing. Residues 188–208 (AGGLCVHLTSGHGGLVYALIL) form a helical membrane-spanning segment. Over 209–230 (GKRNDPVTRKGMPKYKPHSVTS) the chain is Cytoplasmic. The helical transmembrane segment at 231-251 (VVLGTVFLWFGWMFFNGGSAG) threads the bilayer. At 252–257 (NATIRA) the chain is on the extracellular side. The chain crosses the membrane as a helical span at residues 258–278 (WYSIMSTNLAAACGGLTWMVI). Over 279–289 (DYFRCGRKWTT) the chain is Cytoplasmic. The helical transmembrane segment at 290 to 312 (VGLCSGIIAGLVGITPAAGFVPI) threads the bilayer. At 313-315 (WSA) the chain is on the extracellular side. The chain crosses the membrane as a helical span at residues 316–338 (VVIGVVTGAGCNLAVDLKSLLRI). The Cytoplasmic portion of the chain corresponds to 339–346 (DDGLDCYS). The chain crosses the membrane as a helical span at residues 347–367 (IHGVGGCIGSVLTGIFAADYV). The Extracellular segment spans residues 368–393 (NATAGSYISPIDGGWINHHYKQVGYQ). The helical transmembrane segment at 394–414 (LAGICAALAWTVTVTSILLLT) threads the bilayer. The Cytoplasmic segment spans residues 415–499 (MNAIPFLKLR…SSTKNTDHIV (85 aa)). The segment at 428 to 441 (DEEELGTDAAQIGE) is enhancer domain. The linker domain stretch occupies residues 442 to 449 (FTYEESTA). The autoinhibitory domain stretch occupies residues 450–485 (YIPEPIRSKTSAQMPPPHENIDDKIVGNTDAEKNST). The segment at 455 to 499 (IRSKTSAQMPPPHENIDDKIVGNTDAEKNSTPSDASSTKNTDHIV) is disordered. Serine 457 is subject to Phosphoserine. Positions 468 to 482 (ENIDDKIVGNTDAEK) are enriched in basic and acidic residues. Residues 483–493 (NSTPSDASSTK) show a composition bias toward polar residues.

The protein belongs to the ammonia transporter channel (TC 1.A.11.2) family. Phosphorylated at Ser-457 by the TORC1 effector kinase NPR1 under nitrogen-limiting conditions which causes a conformational change in the C-terminal region (CTR) to form an open active conformation. Supplementation of nitrogen source leads to inactivation and instant Ser-457 dephosphorylation via plasma membrane PSR1 and PSR2 redundant phosphatases. Post-translationally, the residue Asn-4 of the protein's N-terminal tail is the only site that is glycosylated.

Its subcellular location is the cell membrane. In terms of biological role, transporter for ammonium (both charged and uncharged NH3 and NH4) to use as a nitrogen source. The affinity of MEP2 is about twenty times higher than that of MEP1. MEP3 has the lowest affinity. Under ammonium limitation acts as an ammonium sensor, generating a signal that leads to pseudohyphal (filamentous) growth. In Saccharomyces cerevisiae (strain ATCC 204508 / S288c) (Baker's yeast), this protein is Ammonium transporter MEP2.